The primary structure comprises 303 residues: D-alanine--D-alanine ligase (303 aa).

Residues 104–300 form the ATP-grasp domain; it reads KLLWNAVGLP…FERLVERVLE (197 aa). Residue 132–187 participates in ATP binding; sequence IAKLGLPLFVKPASEGSSVGVSKVKTAEQLLPAIEEALKYDSIVLVEENLAGAEYS. Residues Asp-254, Glu-267, and Asn-269 each coordinate Mg(2+).

The protein belongs to the D-alanine--D-alanine ligase family. Requires Mg(2+) as cofactor. Mn(2+) is required as a cofactor.

The protein localises to the cytoplasm. The catalysed reaction is 2 D-alanine + ATP = D-alanyl-D-alanine + ADP + phosphate + H(+). The protein operates within cell wall biogenesis; peptidoglycan biosynthesis. Functionally, cell wall formation. The polypeptide is D-alanine--D-alanine ligase (Glaesserella parasuis serovar 5 (strain SH0165) (Haemophilus parasuis)).